A 246-amino-acid chain; its full sequence is MNNNTTAPTYTLRGLQLIGWRDMQHALDYLFADGQLKQGTLVAINAEKMLTIEDNAEVRALINAAEFKYADGISVVRSVRKKYPQAQVSRVAGADLWEELMARAGKEGTPVFLVGGKPEVLAQTEAKLRNQWNVNIVGSQDGYFKPEQRQALFERIHASGAQIVTVAMGSPKQEIFMRDCRLVHPDALYMGVGGTYDVFTGHVKRAPKIWQTLGLEWLYRLLSQPSRIKRQLRLLRYLRWHYTGNL.

It belongs to the glycosyltransferase 26 family.

It carries out the reaction UDP-N-acetyl-alpha-D-mannosaminouronate + N-acetyl-alpha-D-glucosaminyl-di-trans,octa-cis-undecaprenyl diphosphate = beta-D-ManNAcA-(1-&gt;4)-alpha-D-GlcNAc-di-trans,octa-cis-undecaprenyl diphosphate + UDP + H(+). It functions in the pathway bacterial outer membrane biogenesis; enterobacterial common antigen biosynthesis. In terms of biological role, catalyzes the synthesis of Und-PP-GlcNAc-ManNAcA (Lipid II), the second lipid-linked intermediate involved in enterobacterial common antigen (ECA) synthesis. The sequence is that of UDP-N-acetyl-D-mannosaminuronic acid transferase from Escherichia fergusonii (strain ATCC 35469 / DSM 13698 / CCUG 18766 / IAM 14443 / JCM 21226 / LMG 7866 / NBRC 102419 / NCTC 12128 / CDC 0568-73).